Reading from the N-terminus, the 252-residue chain is 3-dehydroquinate dehydratase (252 aa).

3-dehydroquinate contacts are provided by residues 46-48 (EWR) and Arg-82. The active-site Proton donor/acceptor is the His-143. Lys-170 acts as the Schiff-base intermediate with substrate in catalysis. 3-dehydroquinate contacts are provided by Arg-212, Ser-231, and Gln-235.

The protein belongs to the type-I 3-dehydroquinase family. As to quaternary structure, homodimer.

It catalyses the reaction 3-dehydroquinate = 3-dehydroshikimate + H2O. It participates in metabolic intermediate biosynthesis; chorismate biosynthesis; chorismate from D-erythrose 4-phosphate and phosphoenolpyruvate: step 3/7. Functionally, involved in the third step of the chorismate pathway, which leads to the biosynthesis of aromatic amino acids. Catalyzes the cis-dehydration of 3-dehydroquinate (DHQ) and introduces the first double bond of the aromatic ring to yield 3-dehydroshikimate. The protein is 3-dehydroquinate dehydratase of Listeria welshimeri serovar 6b (strain ATCC 35897 / DSM 20650 / CCUG 15529 / CIP 8149 / NCTC 11857 / SLCC 5334 / V8).